A 125-amino-acid polypeptide reads, in one-letter code: MTSVRYTKDHEYVRVEGDVAVVGISDYAQQQLGDVVFVELPEIGKVVTKGGEAAVVESVKAASEVYAPLSGEVVEVNSELEGAPGLVNEAPEGKGWFMKLKLSNPAELDELLNEHAYKDFLDTLA.

In terms of domain architecture, Lipoyl-binding spans valine 19–lysine 101. At lysine 60 the chain carries N6-lipoyllysine.

This sequence belongs to the GcvH family. The glycine cleavage system is composed of four proteins: P, T, L and H. (R)-lipoate serves as cofactor.

Functionally, the glycine cleavage system catalyzes the degradation of glycine. The H protein shuttles the methylamine group of glycine from the P protein to the T protein. This Xanthobacter autotrophicus (strain ATCC BAA-1158 / Py2) protein is Glycine cleavage system H protein.